The chain runs to 683 residues: Patellin-2 (683 aa).

The tract at residues Met-1–Pro-23 is disordered. At Ala-2 the chain carries N-acetylalanine. Position 79 is a phosphoserine (Ser-79). Residues Leu-86–Ala-163 adopt a coiled-coil conformation. The tract at residues Lys-111–Thr-279 is disordered. Basic and acidic residues predominate over residues Val-124 to Ser-161. A compositionally biased stretch (low complexity) spans Pro-232–Thr-243. The span at Glu-244–Ala-275 shows a compositional bias: basic and acidic residues. Lys-394 participates in a covalent cross-link: Glycyl lysine isopeptide (Lys-Gly) (interchain with G-Cter in ubiquitin). The CRAL-TRIO domain maps to Glu-404 to Pro-576. Positions Glu-580–Thr-681 constitute a GOLD domain.

It belongs to the patellin family. As to quaternary structure, interacts with the deubiquitinating enzyme AMSH3.

It is found in the membrane. The protein resides in the cytoplasm. Carrier protein that may be involved in membrane-trafficking events associated with cell plate formation during cytokinesis. Binds to some hydrophobic molecules such as phosphoinositides and promotes their transfer between the different cellular sites. The sequence is that of Patellin-2 (PATL2) from Arabidopsis thaliana (Mouse-ear cress).